We begin with the raw amino-acid sequence, 262 residues long: Probable carboxylesterase SOBER1-like (262 aa).

Active-site charge relay system residues include Ser151, Asp205, and His237.

Belongs to the AB hydrolase superfamily. AB hydrolase 2 family.

Carboxylesterase. In Arabidopsis thaliana (Mouse-ear cress), this protein is Probable carboxylesterase SOBER1-like.